Here is a 314-residue protein sequence, read N- to C-terminus: Tudor-interacting repair regulator protein (314 aa).

Glycine 2 is lipidated: N-myristoyl glycine.

This sequence belongs to the Nudix hydrolase family. TIRR subfamily. In terms of assembly, interacts (via the cytoplasmic part) with syndecan-4 (SDC4), but not with other syndecan proteins. In terms of processing, myristoylated in vitro; additional evidence is however required to confirm myristoylation in vivo. In terms of tissue distribution, ubiquitously expressed. Expressed in embryonic brain, eyes, gizzard, heart, intestine, kidney, liver, tibia and skin.

It is found in the nucleus. The protein resides in the cytoplasm. Its subcellular location is the cytoskeleton. It localises to the cell membrane. The protein localises to the cell junction. It is found in the focal adhesion. Its function is as follows. Key regulator of TP53BP1 required to stabilize TP53BP1 and regulate its recruitment to chromatin. This Gallus gallus (Chicken) protein is Tudor-interacting repair regulator protein (NUDT16L1).